The sequence spans 329 residues: MAQSTLYSRVLGTGSYLPPDRVTNQQLADRLAKEGIETSDEWIVARTGIHARHFAAPDVTTSDLAYQAARRAIEAADIDPQSIDLIIVATSTPDFVFPSTACLLQNKLGIKSGGAAFDVQAVCSGFAYAMAMADSFIRGGQHRTALVVGAETFSRILDFKDRTTCVLFGDGAGAVILSASEEPGVLGSALHADGSYSNILCTPGNVNRGVIEGSAFLHMDGQAVFKLAVNVLEKVAVEALAKANLAPEQIDWLIPHQANIRIMTSTCRKLGLPQERMVVTVDQHGNTSAASIPMALDVAVRDGRIQRGQHVLIEGVGGGFTWGASVFRF.

Residues Cys123 and His256 contribute to the active site. The ACP-binding stretch occupies residues 257 to 261 (QANIR). Residue Asn286 is part of the active site.

This sequence belongs to the thiolase-like superfamily. FabH family. As to quaternary structure, homodimer.

The protein localises to the cytoplasm. It carries out the reaction malonyl-[ACP] + acetyl-CoA + H(+) = 3-oxobutanoyl-[ACP] + CO2 + CoA. Its pathway is lipid metabolism; fatty acid biosynthesis. Catalyzes the condensation reaction of fatty acid synthesis by the addition to an acyl acceptor of two carbons from malonyl-ACP. Catalyzes the first condensation reaction which initiates fatty acid synthesis and may therefore play a role in governing the total rate of fatty acid production. Possesses both acetoacetyl-ACP synthase and acetyl transacylase activities. Its substrate specificity determines the biosynthesis of branched-chain and/or straight-chain of fatty acids. This is Beta-ketoacyl-[acyl-carrier-protein] synthase III from Burkholderia vietnamiensis (strain G4 / LMG 22486) (Burkholderia cepacia (strain R1808)).